The chain runs to 302 residues: MGGKMEKITCVGHTALDYIFNVEKFPEPNTSIQIPSARKYYGGAAANTAVGIKKLGVNSELLSCVGYDFKNSGYERYLKNLDINISKLYYSEEEETPKAWIFTDKDNNQITFFLWGAAKHYKELNPPNFNTEIVHIATGDPEFNLKCAKKAYGNNLVSFDPGQDLPQYSKEMLLEIIEHTNFLFMNKHEFERASNLLNFEIDDYLERVDALIVTKGSKGSVIYTKDKKIEIPCIKAGKVIDPTGAGDSYRAGFLSAYVKGYDLEKCGLIGAATASFVVEAKGCQTNLPTWDKVVERLEKHRI.

Substrate contacts are provided by Asp-17, Gln-33, Gly-43, and Asn-47. ATP is bound at residue Gln-109. Substrate-binding positions include 111–113 (TFF) and Gln-163. ATP contacts are provided by residues Asn-186 and 214 to 219 (TKGSKG). Asp-247 contacts substrate. Asp-247 (proton acceptor) is an active-site residue.

Homodimer. Mg(2+) is required as a cofactor. The cofactor is Mn(2+).

It carries out the reaction cytidine + ATP = CMP + ADP + H(+). The catalysed reaction is guanosine + ATP = GMP + ADP + H(+). It catalyses the reaction inosine + ATP = IMP + ADP + H(+). Its function is as follows. Catalyzes the phosphorylation of a wide range of nucleosides to yield nucleoside monophosphates. Shows the highest activity for inosine, guanosine and cytidine, but very poor kinase activity with adenosine, thymidine, uridine and xanthosine. ATP is the best phosphate donor, but can also use ITP and GTP. Shows extremely low activity with fructose-6-phosphate. The protein is Nucleoside kinase of Methanocaldococcus jannaschii (strain ATCC 43067 / DSM 2661 / JAL-1 / JCM 10045 / NBRC 100440) (Methanococcus jannaschii).